Consider the following 242-residue polypeptide: Ribonuclease PH (242 aa).

Phosphate is bound by residues Arg-89 and 127–129; that span reads GTR.

Belongs to the RNase PH family. In terms of assembly, homohexameric ring arranged as a trimer of dimers.

The catalysed reaction is tRNA(n+1) + phosphate = tRNA(n) + a ribonucleoside 5'-diphosphate. In terms of biological role, phosphorolytic 3'-5' exoribonuclease that plays an important role in tRNA 3'-end maturation. Removes nucleotide residues following the 3'-CCA terminus of tRNAs; can also add nucleotides to the ends of RNA molecules by using nucleoside diphosphates as substrates, but this may not be physiologically important. Probably plays a role in initiation of 16S rRNA degradation (leading to ribosome degradation) during starvation. In Neisseria meningitidis serogroup A / serotype 4A (strain DSM 15465 / Z2491), this protein is Ribonuclease PH.